We begin with the raw amino-acid sequence, 778 residues long: Ribonucleoside-diphosphate reductase large subunit (778 aa).

Substrate contacts are provided by residues Ser177, 192 to 193 (SC), Gly221, 419 to 423 (NLCIE), and 613 to 617 (PTATS). Cys193 and Cys439 are joined by a disulfide. Asn419 (proton acceptor) is an active-site residue. The active-site Cysteine radical intermediate is the Cys421. Residue Glu423 is the Proton acceptor of the active site.

It belongs to the ribonucleoside diphosphate reductase large chain family. In terms of assembly, heterotetramer composed of a homodimer of the large subunit (R1) and a homodimer of the small subunit (R2). Larger multisubunit protein complex are also active, composed of (R1)n(R2)n.

The catalysed reaction is a 2'-deoxyribonucleoside 5'-diphosphate + [thioredoxin]-disulfide + H2O = a ribonucleoside 5'-diphosphate + [thioredoxin]-dithiol. Its activity is regulated as follows. Under complex allosteric control mediated by deoxynucleoside triphosphates and ATP binding. The type of nucleotide bound at the specificity site determines substrate preference. It seems probable that ATP makes the enzyme reduce CDP and UDP, dGTP favors ADP reduction and dTTP favors GDP reduction. Functionally, ribonucleoside-diphosphate reductase holoenzyme provides the precursors necessary for viral DNA synthesis. Allows virus growth in non-dividing cells. Catalyzes the biosynthesis of deoxyribonucleotides from the corresponding ribonucleotides. This Ornithodoros (relapsing fever ticks) protein is Ribonucleoside-diphosphate reductase large subunit.